Consider the following 523-residue polypeptide: Bifunctional purine biosynthesis protein PurH (523 aa).

Residues 1–145 (MIKQALLSVS…KNHRDVTVIV (145 aa)) enclose the MGS-like domain.

It belongs to the PurH family.

The enzyme catalyses (6R)-10-formyltetrahydrofolate + 5-amino-1-(5-phospho-beta-D-ribosyl)imidazole-4-carboxamide = 5-formamido-1-(5-phospho-D-ribosyl)imidazole-4-carboxamide + (6S)-5,6,7,8-tetrahydrofolate. It catalyses the reaction IMP + H2O = 5-formamido-1-(5-phospho-D-ribosyl)imidazole-4-carboxamide. Its pathway is purine metabolism; IMP biosynthesis via de novo pathway; 5-formamido-1-(5-phospho-D-ribosyl)imidazole-4-carboxamide from 5-amino-1-(5-phospho-D-ribosyl)imidazole-4-carboxamide (10-formyl THF route): step 1/1. It functions in the pathway purine metabolism; IMP biosynthesis via de novo pathway; IMP from 5-formamido-1-(5-phospho-D-ribosyl)imidazole-4-carboxamide: step 1/1. The polypeptide is Bifunctional purine biosynthesis protein PurH (Cupriavidus pinatubonensis (strain JMP 134 / LMG 1197) (Cupriavidus necator (strain JMP 134))).